Reading from the N-terminus, the 138-residue chain is Nucleoside diphosphate kinase (138 aa).

Lys9, Phe57, Arg85, Thr91, Arg102, and Asn112 together coordinate ATP. Catalysis depends on His115, which acts as the Pros-phosphohistidine intermediate.

The protein belongs to the NDK family. In terms of assembly, homotetramer. It depends on Mg(2+) as a cofactor.

It localises to the cytoplasm. It catalyses the reaction a 2'-deoxyribonucleoside 5'-diphosphate + ATP = a 2'-deoxyribonucleoside 5'-triphosphate + ADP. The enzyme catalyses a ribonucleoside 5'-diphosphate + ATP = a ribonucleoside 5'-triphosphate + ADP. In terms of biological role, major role in the synthesis of nucleoside triphosphates other than ATP. The ATP gamma phosphate is transferred to the NDP beta phosphate via a ping-pong mechanism, using a phosphorylated active-site intermediate. The protein is Nucleoside diphosphate kinase of Exiguobacterium sibiricum (strain DSM 17290 / CCUG 55495 / CIP 109462 / JCM 13490 / 255-15).